A 409-amino-acid polypeptide reads, in one-letter code: Arginine deiminase (409 aa).

The active-site Amidino-cysteine intermediate is Cys-399.

This sequence belongs to the arginine deiminase family.

It is found in the cytoplasm. The enzyme catalyses L-arginine + H2O = L-citrulline + NH4(+). It functions in the pathway amino-acid degradation; L-arginine degradation via ADI pathway; carbamoyl phosphate from L-arginine: step 1/2. This chain is Arginine deiminase, found in Streptococcus pneumoniae serotype 19F (strain G54).